The primary structure comprises 152 residues: Histone H2B.1 (152 aa).

The span at 1 to 28 shows a compositional bias: basic and acidic residues; sequence MAPKAEKKPAAKKPAEEEPAAEKAEKTP. Residues 1–60 form a disordered region; sequence MAPKAEKKPAAKKPAEEEPAAEKAEKTPAGKKPKAEKRLPAGKSAAKEGGDKKGKKKAKK. N6-acetyllysine is present on residues Lys7 and Lys37. Lys148 participates in a covalent cross-link: Glycyl lysine isopeptide (Lys-Gly) (interchain with G-Cter in ubiquitin).

The protein belongs to the histone H2B family. As to quaternary structure, the nucleosome is a histone octamer containing two molecules each of H2A, H2B, H3 and H4 assembled in one H3-H4 heterotetramer and two H2A-H2B heterodimers. The octamer wraps approximately 147 bp of DNA. In terms of processing, can be acetylated to form H2BK6ac and H2BK33ac. Post-translationally, monoubiquitinated to form H2BK143ub1; may give a specific tag for epigenetic transcriptional activation.

The protein resides in the nucleus. It is found in the chromosome. Its function is as follows. Core component of nucleosome. Nucleosomes wrap and compact DNA into chromatin, limiting DNA accessibility to the cellular machineries which require DNA as a template. Histones thereby play a central role in transcription regulation, DNA repair, DNA replication and chromosomal stability. DNA accessibility is regulated via a complex set of post-translational modifications of histones, also called histone code, and nucleosome remodeling. This chain is Histone H2B.1, found in Triticum aestivum (Wheat).